The primary structure comprises 492 residues: Cytochrome P450 26A1 (492 aa).

Position 437 (cysteine 437) interacts with heme.

This sequence belongs to the cytochrome P450 family. Requires heme as cofactor.

It is found in the endoplasmic reticulum membrane. It localises to the microsome membrane. It catalyses the reaction all-trans-retinoate + reduced [NADPH--hemoprotein reductase] + O2 = all-trans-(4S)-hydroxyretinoate + oxidized [NADPH--hemoprotein reductase] + H2O + H(+). The enzyme catalyses all-trans-(4S)-hydroxyretinoate + reduced [NADPH--hemoprotein reductase] + O2 = all-trans-(4S,16)-dihydroxyretinoate + oxidized [NADPH--hemoprotein reductase] + H2O + H(+). It carries out the reaction all-trans-retinoate + reduced [NADPH--hemoprotein reductase] + O2 = all-trans-18-hydroxyretinoate + oxidized [NADPH--hemoprotein reductase] + H2O + H(+). Functionally, a cytochrome P450 monooxygenase involved in the metabolism of retinoates (RAs), the active metabolites of vitamin A, and critical signaling molecules in animals. RAs exist as at least four different isomers: all-trans-RA (atRA), 9-cis-RA, 13-cis-RA, and 9,13-dicis-RA, where atRA is considered to be the biologically active isomer, although 9-cis-RA and 13-cis-RA also have activity. Catalyzes the hydroxylation of atRA primarily at C-4 and C-18, thereby contributing to the regulation of atRA homeostasis and signaling. Hydroxylation of atRA limits its biological activity and initiates a degradative process leading to its eventual elimination. Involved in the convertion of atRA to all-trans-4-oxo-RA. Able to metabolize other RAs such as 9-cis, 13-cis and 9,13-di-cis RA. Can oxidize all-trans-13,14-dihydroretinoate (DRA) to metabolites which could include all-trans-4-oxo-DRA, all-trans-4-hydroxy-DRA, all-trans-5,8-epoxy-DRA, and all-trans-18-hydroxy-DRA. May play a role in the oxidative metabolism of xenobiotics such as tazarotenic acid. The polypeptide is Cytochrome P450 26A1 (CYP26A1) (Gallus gallus (Chicken)).